A 426-amino-acid chain; its full sequence is UPF0164 protein TP_0548 (426 aa).

A signal peptide spans 1–37 (MISCSVRRRPRWEPQVGAAFLAFALLPVLASGRGMQA).

The protein belongs to the UPF0164 family.

This chain is UPF0164 protein TP_0548, found in Treponema pallidum (strain Nichols).